The primary structure comprises 359 residues: Biotin synthase (359 aa).

One can recognise a Radical SAM core domain in the interval 67 to 302 (CCGNRVDLCS…QQILRYAGGR (236 aa)). Cysteine 85, cysteine 89, and cysteine 92 together coordinate [4Fe-4S] cluster. Residues cysteine 130, cysteine 167, cysteine 227, and arginine 297 each coordinate [2Fe-2S] cluster.

The protein belongs to the radical SAM superfamily. Biotin synthase family. As to quaternary structure, homodimer. It depends on [4Fe-4S] cluster as a cofactor. Requires [2Fe-2S] cluster as cofactor.

It catalyses the reaction (4R,5S)-dethiobiotin + (sulfur carrier)-SH + 2 reduced [2Fe-2S]-[ferredoxin] + 2 S-adenosyl-L-methionine = (sulfur carrier)-H + biotin + 2 5'-deoxyadenosine + 2 L-methionine + 2 oxidized [2Fe-2S]-[ferredoxin]. It functions in the pathway cofactor biosynthesis; biotin biosynthesis; biotin from 7,8-diaminononanoate: step 2/2. Functionally, catalyzes the conversion of dethiobiotin (DTB) to biotin by the insertion of a sulfur atom into dethiobiotin via a radical-based mechanism. The protein is Biotin synthase of Gloeothece citriformis (strain PCC 7424) (Cyanothece sp. (strain PCC 7424)).